Here is a 174-residue protein sequence, read N- to C-terminus: Small hydrophobic protein (174 aa).

A helical membrane pass occupies residues 33-53 (VAVICAILALIFLVATIGLSV). An N-linked (GlcNAc...) asparagine; by host glycan is attached at N165.

It is found in the membrane. This Meleagris gallopavo (Wild turkey) protein is Small hydrophobic protein (SH).